A 100-amino-acid polypeptide reads, in one-letter code: Urease subunit gamma (100 aa).

It belongs to the urease gamma subunit family. In terms of assembly, heterotrimer of UreA (gamma), UreB (beta) and UreC (alpha) subunits. Three heterotrimers associate to form the active enzyme.

It is found in the cytoplasm. The catalysed reaction is urea + 2 H2O + H(+) = hydrogencarbonate + 2 NH4(+). It participates in nitrogen metabolism; urea degradation; CO(2) and NH(3) from urea (urease route): step 1/1. The chain is Urease subunit gamma from Synechococcus sp. (strain WH7805).